We begin with the raw amino-acid sequence, 689 residues long: Armadillo-like helical domain-containing protein 3 (689 aa).

The helical transmembrane segment at 520–538 (IFTLTLMVVNLFNMFITYG) threads the bilayer.

The protein belongs to the ARMH3 family.

It localises to the golgi apparatus membrane. The protein resides in the cytoplasm. Functionally, may be involved in Golgi maintenance and protein secretion. In Xenopus laevis (African clawed frog), this protein is Armadillo-like helical domain-containing protein 3.